The sequence spans 92 residues: Small ribosomal subunit protein bS18 (92 aa).

It belongs to the bacterial ribosomal protein bS18 family. Part of the 30S ribosomal subunit. Forms a tight heterodimer with protein bS6.

In terms of biological role, binds as a heterodimer with protein bS6 to the central domain of the 16S rRNA, where it helps stabilize the platform of the 30S subunit. The polypeptide is Small ribosomal subunit protein bS18 (Cupriavidus taiwanensis (strain DSM 17343 / BCRC 17206 / CCUG 44338 / CIP 107171 / LMG 19424 / R1) (Ralstonia taiwanensis (strain LMG 19424))).